Consider the following 526-residue polypeptide: Fluoride export protein 1 (526 aa).

Disordered regions lie at residues methionine 1 to serine 73 and alanine 90 to glycine 149. Over methionine 1–arginine 159 the chain is Cytoplasmic. Basic and acidic residues-rich tracts occupy residues serine 21–histidine 36 and proline 103–glutamate 123. A helical membrane pass occupies residues leucine 160–alanine 180. Topologically, residues arginine 181–serine 194 are extracellular. A helical transmembrane segment spans residues proline 195–alanine 215. At glutamate 216–threonine 260 the chain is on the cytoplasmic side. The segment at proline 223–alanine 242 is disordered. The chain crosses the membrane as a helical span at residues isoleucine 261–phenylalanine 281. The Extracellular segment spans residues isoleucine 282–serine 310. Residues phenylalanine 311–alanine 331 form a helical membrane-spanning segment. Over glycine 332 to arginine 361 the chain is Cytoplasmic. A helical membrane pass occupies residues leucine 362–proline 382. At aspartate 383–alanine 398 the chain is on the extracellular side. The chain crosses the membrane as a helical span at residues threonine 399–leucine 419. Residues asparagine 420 to proline 424 are Cytoplasmic-facing. A helical transmembrane segment spans residues serine 425–tryptophan 445. Over aspartate 446–serine 452 the chain is Extracellular. A helical membrane pass occupies residues leucine 453–leucine 473. At threonine 474 to tyrosine 492 the chain is on the cytoplasmic side. The helical transmembrane segment at valine 493–leucine 513 threads the bilayer. Residues arginine 514–serine 526 lie on the Extracellular side of the membrane.

This sequence belongs to the fluoride channel Fluc/FEX (TC 1.A.43) family.

The protein resides in the cell membrane. It catalyses the reaction fluoride(in) = fluoride(out). In terms of biological role, fluoride channel required for the rapid expulsion of cytoplasmic fluoride. The protein is Fluoride export protein 1 of Neurospora crassa (strain ATCC 24698 / 74-OR23-1A / CBS 708.71 / DSM 1257 / FGSC 987).